Consider the following 875-residue polypeptide: Probable ATP-dependent RNA helicase DDX10 (875 aa).

The tract at residues 1-43 (MGKTANSPGSGARPDPVRSFNRWKKKHSHRQNKKKQLRKQLKK) is disordered. Threonine 4 bears the Phosphothreonine mark. Serine 7 is modified (phosphoserine). The span at 21–41 (NRWKKKHSHRQNKKKQLRKQL) shows a compositional bias: basic residues. The short motif at 69–97 (TRFSDFPLSKKTLKGLQEAQYRLVTEIQK) is the Q motif element. ATP is bound by residues 89-91 (YRL), glutamine 96, and 113-120 (AKTGSGKT). The Helicase ATP-binding domain occupies 100 to 274 (IGLALQGKDV…RLSLKNPEYV (175 aa)). The DEAD box signature appears at 222–225 (DEAD). Positions 287 to 448 (TLEQNYIVCE…EIKINPEKLI (162 aa)) constitute a Helicase C-terminal domain. Serine 539 bears the Phosphoserine mark. An N6-acetyllysine modification is found at lysine 555. A disordered region spans residues 562–631 (GGKRLEGTEH…QFLDRDEEEE (70 aa)). A compositionally biased stretch (basic and acidic residues) spans 564-575 (KRLEGTEHRQDN). Threonine 577 carries the phosphothreonine modification. A compositionally biased stretch (acidic residues) spans 577–593 (TGNEEQEEEEDDEEEME). The segment covering 603–613 (QAPSLPNTSEA) has biased composition (polar residues). Lysine 649 is covalently cross-linked (Glycyl lysine isopeptide (Lys-Gly) (interchain with G-Cter in SUMO2)). Residues 703 to 850 (MQKSAIKDAE…HNRKKARWDT (148 aa)) are disordered. The span at 727–741 (ERLQEEDKFDKEEYR) shows a compositional bias: basic and acidic residues. Over residues 742–751 (KKIKAKHREK) the composition is skewed to basic residues. The segment covering 752-771 (RLKEREARREANKRQAKAKD) has biased composition (basic and acidic residues). Residues 772–790 (EEEAFLDWSDDDDDDDDGF) are compositionally biased toward acidic residues. At serine 780 the chain carries Phosphoserine. Positions 812 to 821 (MENKISDTKK) are enriched in basic and acidic residues. Serine 831 is modified (phosphoserine).

This sequence belongs to the DEAD box helicase family. DDX10/DBP4 subfamily. In terms of assembly, interacts with AIM2; this interaction promotes AIM2 stability. Interacts with SCNA; this interaction causes DDX10 mislocalization to the nucleoplasm and cytoplasmic inclusions. In terms of tissue distribution, high in testis but widely expressed.

Its subcellular location is the cytoplasm. It is found in the nucleus. The protein resides in the nucleolus. The enzyme catalyses ATP + H2O = ADP + phosphate + H(+). In terms of biological role, putative ATP-dependent RNA helicase that plays various role in innate immunity or inflammation. Plays a role in the enhancement of AIM2-induced inflammasome activation by interacting with AIM2 and stabilizing its protein level. Negatively regulates viral infection by promoting interferon beta production and interferon stimulated genes/ISGs expression. This chain is Probable ATP-dependent RNA helicase DDX10 (DDX10), found in Homo sapiens (Human).